Consider the following 454-residue polypeptide: tRNA modification GTPase MnmE (454 aa).

(6S)-5-formyl-5,6,7,8-tetrahydrofolate is bound by residues Arg-23, Glu-80, and Lys-120. Residues 216–377 (TIKIVIAGPP…LKNKILEITT (162 aa)) enclose the TrmE-type G domain. Asn-226 is a binding site for K(+). GTP is bound by residues 226–231 (NVGKSS), 245–251 (TNIPGTT), and 270–273 (DTAG). Ser-230 provides a ligand contact to Mg(2+). Residues Thr-245, Ile-247, and Thr-250 each contribute to the K(+) site. Thr-251 is a binding site for Mg(2+). Lys-454 serves as a coordination point for (6S)-5-formyl-5,6,7,8-tetrahydrofolate.

This sequence belongs to the TRAFAC class TrmE-Era-EngA-EngB-Septin-like GTPase superfamily. TrmE GTPase family. As to quaternary structure, homodimer. Heterotetramer of two MnmE and two MnmG subunits. It depends on K(+) as a cofactor.

It is found in the cytoplasm. Its function is as follows. Exhibits a very high intrinsic GTPase hydrolysis rate. Involved in the addition of a carboxymethylaminomethyl (cmnm) group at the wobble position (U34) of certain tRNAs, forming tRNA-cmnm(5)s(2)U34. The polypeptide is tRNA modification GTPase MnmE (Buchnera aphidicola subsp. Cinara cedri (strain Cc)).